A 158-amino-acid polypeptide reads, in one-letter code: S-ribosylhomocysteine lyase (158 aa).

Fe cation contacts are provided by H54, H58, and C124.

Belongs to the LuxS family. Homodimer. Fe cation serves as cofactor.

It catalyses the reaction S-(5-deoxy-D-ribos-5-yl)-L-homocysteine = (S)-4,5-dihydroxypentane-2,3-dione + L-homocysteine. Involved in the synthesis of autoinducer 2 (AI-2) which is secreted by bacteria and is used to communicate both the cell density and the metabolic potential of the environment. The regulation of gene expression in response to changes in cell density is called quorum sensing. Catalyzes the transformation of S-ribosylhomocysteine (RHC) to homocysteine (HC) and 4,5-dihydroxy-2,3-pentadione (DPD). The chain is S-ribosylhomocysteine lyase from Lactobacillus johnsonii (strain CNCM I-12250 / La1 / NCC 533).